The sequence spans 146 residues: Large ribosomal subunit protein uL13 (146 aa).

This sequence belongs to the universal ribosomal protein uL13 family. Part of the 50S ribosomal subunit.

In terms of biological role, this protein is one of the early assembly proteins of the 50S ribosomal subunit, although it is not seen to bind rRNA by itself. It is important during the early stages of 50S assembly. This is Large ribosomal subunit protein uL13 from Borreliella burgdorferi (strain ATCC 35210 / DSM 4680 / CIP 102532 / B31) (Borrelia burgdorferi).